The sequence spans 528 residues: Chromosomal replication initiator protein DnaA (528 aa).

Residues 1 to 104 (MNDDPNALAR…PVDDEPESEA (104 aa)) form a domain I, interacts with DnaA modulators region. A disordered region spans residues 93-159 (AAPVDDEPES…DFEEVDDDSE (67 aa)). A compositionally biased stretch (basic and acidic residues) spans 104-123 (APSRERRPDPEPVHTPRHLE). Residues 105-187 (PSRERRPDPE…GPAPAATGGN (83 aa)) are domain II. A compositionally biased stretch (acidic residues) spans 149–159 (TDFEEVDDDSE). Residues 188–404 (SLNAKYTFDT…GALIRVTAFA (217 aa)) form a domain III, AAA+ region region. ATP-binding residues include Gly232, Gly234, Lys235, and Thr236. Residues 405-528 (SLNRQPLDLT…TARIKQRSKR (124 aa)) form a domain IV, binds dsDNA region.

Belongs to the DnaA family. Oligomerizes as a right-handed, spiral filament on DNA at oriC.

It localises to the cytoplasm. Its function is as follows. Plays an essential role in the initiation and regulation of chromosomal replication. ATP-DnaA binds to the origin of replication (oriC) to initiate formation of the DNA replication initiation complex once per cell cycle. Binds the DnaA box (a 9 base pair repeat at the origin) and separates the double-stranded (ds)DNA. Forms a right-handed helical filament on oriC DNA; dsDNA binds to the exterior of the filament while single-stranded (ss)DNA is stabiized in the filament's interior. The ATP-DnaA-oriC complex binds and stabilizes one strand of the AT-rich DNA unwinding element (DUE), permitting loading of DNA polymerase. After initiation quickly degrades to an ADP-DnaA complex that is not apt for DNA replication. Binds acidic phospholipids. This is Chromosomal replication initiator protein DnaA from Rhodococcus opacus (strain B4).